The primary structure comprises 7570 residues: Dystonin (7570 aa).

Calponin-homology (CH) domains are found at residues 35–138 and 151–255; these read KVQK…LHFQ and MSAK…DAFP. The tract at residues 35-252 is actin-binding; sequence KVQKKTFTKW…VITYVSSLYD (218 aa). 4 positions are modified to phosphoserine: Leu135, Lys184, Ser236, and Ser237. Spectrin repeat units follow at residues 602–699 and 701–802; these read EINM…RHLD and LHNF…QHIK. The SH3 domain occupies 887–944; sequence KTSIPIKAICDYRQIEITIYKDDECVLANNSHRAKWKVISPTGNEAMVPSVCFTVPPP. Spectrin repeat units lie at residues 1293-1422 and 1440-1540; these read KYYR…KFAG and KEHV…QESQ. The residue at position 1382 (Ser1382) is a Phosphoserine. Residues 1383-1389 carry the Nuclear localization signal; in isoform 6 motif; that stretch reads PVKRRRM. Residue Glu1565 is modified to Phosphoserine. Plectin repeat units follow at residues 1584–1626, 1660–1703, 1774–1817, 1818–1855, and 1856–1891; these read IRLL…QLKE, KVLE…LERQ, RLLS…LTYQ, VQTGGIIQSNPAKRLTVDEAVQCDLITSSSALLVLEAQ, and RGYVGLIWPHSGEIFPTSSSLQQELITNELAYKILN. Phosphoserine is present on Ser2229. Disordered stretches follow at residues 2317-2346, 2383-2441, and 2585-2616; these read SNTSGEDEKTHPGFQQMPEDKEDESEIEEY, LLND…DETA, and DYIYDSNDQDDDDDDGIDEEGGGIRDENGKPR. A compositionally biased stretch (acidic residues) spans 2336-2345; sequence DKEDESEIEE. The span at 2385–2394 shows a compositional bias: low complexity; it reads NDQQNNTGTD. Composition is skewed to acidic residues over residues 2395 to 2412, 2430 to 2439, and 2591 to 2605; these read TDSDDDFYDTPLFEDDDH, YDTLQEENDE, and NDQDDDDDDGIDEEG. Ser2919 bears the Phosphoserine mark. Residues 3190-3221 are disordered; it reads EASTVPSDSQMSDSSGVSPMTNSSELKPESRD. Over residues 3192–3209 the composition is skewed to low complexity; that stretch reads STVPSDSQMSDSSGVSPM. 28 Spectrin repeats span residues 3395–3501, 3643–3752, 3926–4040, 4047–4153, 4160–4259, 4269–4368, 4516–4621, 4628–4732, 4742–4842, 4849–4951, 4958–5058, 5068–5167, 5174–5277, 5284–5388, 5395–5497, 5504–5715, 5831–5933, 5941–6041, 6048–6154, 6161–6263, 6270–6373, 6380–6482, 6489–6591, 6598–6700, 6707–6810, 6817–6918, 6925–7027, and 7037–7167; these read LQHT…KQIM, QEYK…KELD, EKFD…NNLK, QHYE…EKLQ, LSVQ…ETLA, ELFE…EAVT, QKAQ…QKLE, TQFQ…DWID, QSLL…QHLQ, HQFQ…NKLK, LKYK…FCLE, QEVS…SFLE, GHFQ…EQVE, EEFY…AQLQ, GRFQ…RQLE, QQFH…KTLE, QQFD…LQLE, QFWE…VALD, TQFH…AKLL, EKFW…DKLE, VQYQ…HKLE, GQFQ…QQLD, KGFH…TKLE, MEFH…RSLD, KQFH…NKLE, GQFT…TRLE, EEFH…QRLA, and QELL…RKLN. A Phosphoserine modification is found at Ser3968. The residue at position 4749 (Ser4749) is a Phosphoserine. Lys5470 is covalently cross-linked (Glycyl lysine isopeptide (Lys-Gly) (interchain with G-Cter in ubiquitin)). EF-hand domains are found at residues 7197-7232 and 7233-7268; these read HKKSRVMDFFRRIDKDQDGKITRQEFIDGILSSKFP and TSRLEMSAVADIFDRDGDGYIDYYEFVAALHPNKDA. Asp7210, Asp7212, Asp7214, Lys7216, Glu7221, Asp7246, Asp7248, Asp7250, Tyr7252, and Glu7257 together coordinate Ca(2+). The GAR domain occupies 7273 to 7351; sequence TDADKIEDEV…EFLVKNDPCR (79 aa). Disordered regions lie at residues 7358–7379, 7395–7452, and 7481–7570; these read KMLRSESNSSITTTQPTIAKGR, SQGM…SKLR, and QFAD…SSKR. Positions 7362–7374 are enriched in polar residues; it reads SESNSSITTTQPT. Composition is skewed to low complexity over residues 7411 to 7441 and 7490 to 7504; these read SSRGASPNRSTSVSSQAAQAASPQVPATTTP and SRPGSRAGSKAGSRA. Position 7432 is a phosphoserine (Ser7432). 3 positions are modified to phosphoserine: Ser7510, Ser7513, and Ser7525. Positions 7519 to 7535 are enriched in polar residues; sequence EIQSVCSDVETVPQTHR. A Microtubule tip localization signal motif is present at residues 7550–7553; sequence SKIP.

In terms of assembly, homodimer. Isoform 1 interacts (via N-terminus) with PLEC (via N-terminus). Interacts with the neuronal intermediate filament protein, PRPH. Interacts with DES. Interacts with SYNE3. Isoform 1 and isoform 6 can homodimerize (via N-terminus). Isoform 1 interacts (via N-terminus) with ACTN2. Isoform 1 interacts (via N-terminus) with PLEC (via N-terminus). Isoform 3 interacts (via N-terminus) with COL17A1 (via cytoplasmic region). Isoform 3 interacts (via N-terminus) with ITGB4 isoform beta-4a (via cytoplasmic region). Isoform 3 interacts (via N-terminus) with ERBIN (via C-terminus). Isoform 3 associates (via C-terminal) with KRT5-KRT14 (via rod region) intermediate filaments of keratins. Interacts with MAPRE1; probably required for targeting to the growing microtubule plus ends. Interacts with TMIGD2. Isoform 9 interacts with TMEM108. As to expression, isoform 1 is expressed in myoblasts (at protein level). Isoform 3 is expressed in the skin. Isoform 6 is expressed in the brain. Highly expressed in skeletal muscle and cultured keratinocytes.

Its subcellular location is the cytoplasm. It localises to the cytoskeleton. The protein localises to the stress fiber. The protein resides in the cell projection. It is found in the axon. Its subcellular location is the myofibril. It localises to the sarcomere. The protein localises to the z line. The protein resides in the h zone. It is found in the cell junction. Its subcellular location is the hemidesmosome. It localises to the nucleus. The protein localises to the nucleus envelope. The protein resides in the membrane. It is found in the endoplasmic reticulum membrane. Its subcellular location is the cell cortex. It localises to the cell membrane. Functionally, cytoskeletal linker protein. Acts as an integrator of intermediate filaments, actin and microtubule cytoskeleton networks. Required for anchoring either intermediate filaments to the actin cytoskeleton in neural and muscle cells or keratin-containing intermediate filaments to hemidesmosomes in epithelial cells. The proteins may self-aggregate to form filaments or a two-dimensional mesh. Regulates the organization and stability of the microtubule network of sensory neurons to allow axonal transport. Mediates docking of the dynein/dynactin motor complex to vesicle cargos for retrograde axonal transport through its interaction with TMEM108 and DCTN1. Plays a structural role in the assembly of hemidesmosomes of epithelial cells; anchors keratin-containing intermediate filaments to the inner plaque of hemidesmosomes. Required for the regulation of keratinocyte polarity and motility; mediates integrin ITGB4 regulation of RAC1 activity. In terms of biological role, required for bundling actin filaments around the nucleus. Its function is as follows. Regulates the organization and stability of the microtubule network of sensory neurons to allow axonal transport. The chain is Dystonin from Homo sapiens (Human).